A 250-amino-acid polypeptide reads, in one-letter code: Anamorsin homolog 2 (250 aa).

Residues 1-102 (MNLKITINQQ…QTKKINIPQQ (102 aa)) are N-terminal SAM-like domain. Residues 102–149 (QDFNNCYGKYDYIEQKFQNQINFFKQVDLKGNQETIDENELLNDGVEV) are linker. 4 residues coordinate [2Fe-2S] cluster: C155, C162, C165, and C167. The fe-S binding site A stretch occupies residues 155-167 (CASKPRACANCTC). 4 residues coordinate [4Fe-4S] cluster: C193, C196, C204, and C207. 2 short sequence motifs (cx2C motif) span residues 193–196 (CGSC) and 204–207 (CANC). The interval 193 to 207 (CGSCYLGDAFRCANC) is fe-S binding site B.

It belongs to the anamorsin family. As to quaternary structure, monomer. It depends on [2Fe-2S] cluster as a cofactor. Requires [4Fe-4S] cluster as cofactor.

Its subcellular location is the cytoplasm. It localises to the mitochondrion intermembrane space. Functionally, component of the cytosolic iron-sulfur (Fe-S) protein assembly (CIA) machinery. Required for the maturation of extramitochondrial Fe-S proteins. Part of an electron transfer chain functioning in an early step of cytosolic Fe-S biogenesis, facilitating the de novo assembly of a [4Fe-4S] cluster on the cytosolic Fe-S scaffold complex. Electrons are transferred from NADPH via a FAD- and FMN-containing diflavin oxidoreductase. Together with the diflavin oxidoreductase, also required for the assembly of the diferric tyrosyl radical cofactor of ribonucleotide reductase (RNR), probably by providing electrons for reduction during radical cofactor maturation in the catalytic small subunit. The protein is Anamorsin homolog 2 of Paramecium tetraurelia.